The following is a 213-amino-acid chain: 3-isopropylmalate dehydratase small subunit (213 aa).

It belongs to the LeuD family. LeuD type 1 subfamily. In terms of assembly, heterodimer of LeuC and LeuD.

It catalyses the reaction (2R,3S)-3-isopropylmalate = (2S)-2-isopropylmalate. It participates in amino-acid biosynthesis; L-leucine biosynthesis; L-leucine from 3-methyl-2-oxobutanoate: step 2/4. Its function is as follows. Catalyzes the isomerization between 2-isopropylmalate and 3-isopropylmalate, via the formation of 2-isopropylmaleate. The sequence is that of 3-isopropylmalate dehydratase small subunit from Neisseria gonorrhoeae (strain ATCC 700825 / FA 1090).